The following is an 857-amino-acid chain: Linoleate 9S-lipoxygenase 6 (857 aa).

One can recognise a PLAT domain in the interval 26-156 (NALDFTDLAG…RYKSDRIFFA (131 aa)). The 699-residue stretch at 159–857 (PYLPSETPEL…GKGIPNSVSI (699 aa)) folds into the Lipoxygenase domain. Positions 205-243 (NPDQGEQNVRTTLGGSADYPYPRRGRTGRPPTRTDPKSE) are disordered. Polar residues predominate over residues 208–218 (QGEQNVRTTLG). Fe cation contacts are provided by His-518, His-523, His-709, Asn-713, and Ile-857.

This sequence belongs to the lipoxygenase family. In terms of assembly, monomer. Fe cation serves as cofactor. Expressed in tubers and roots. Detected in leaves, petioles and stems.

It is found in the cytoplasm. The enzyme catalyses (9Z,12Z)-octadecadienoate + O2 = (9S)-hydroperoxy-(10E,12Z)-octadecadienoate. Its pathway is lipid metabolism; oxylipin biosynthesis. Its function is as follows. Plant lipoxygenases may be involved in a number of diverse aspects of plant physiology including growth and development, pest resistance, and senescence or responses to wounding. Catalyzes the hydroperoxidation of lipids containing a cis,cis-1,4-pentadiene structure. Linoleic and linolenic acids are the preferred substrates, but is also active with arachidonic acid. The products are almost exclusively the S enantiomers. The chain is Linoleate 9S-lipoxygenase 6 (LOX1.6) from Solanum tuberosum (Potato).